The chain runs to 297 residues: 4-diphosphocytidyl-2-C-methyl-D-erythritol kinase (297 aa).

Residue Lys-22 is part of the active site. 111-121 contributes to the ATP binding site; it reads PSQAGMGGGSS. The active site involves Asp-153.

This sequence belongs to the GHMP kinase family. IspE subfamily.

The enzyme catalyses 4-CDP-2-C-methyl-D-erythritol + ATP = 4-CDP-2-C-methyl-D-erythritol 2-phosphate + ADP + H(+). The protein operates within isoprenoid biosynthesis; isopentenyl diphosphate biosynthesis via DXP pathway; isopentenyl diphosphate from 1-deoxy-D-xylulose 5-phosphate: step 3/6. Catalyzes the phosphorylation of the position 2 hydroxy group of 4-diphosphocytidyl-2C-methyl-D-erythritol. In Polaromonas naphthalenivorans (strain CJ2), this protein is 4-diphosphocytidyl-2-C-methyl-D-erythritol kinase.